The sequence spans 878 residues: Alanine--tRNA ligase (878 aa).

4 residues coordinate Zn(2+): histidine 567, histidine 571, cysteine 669, and histidine 673.

The protein belongs to the class-II aminoacyl-tRNA synthetase family. Requires Zn(2+) as cofactor.

Its subcellular location is the cytoplasm. It catalyses the reaction tRNA(Ala) + L-alanine + ATP = L-alanyl-tRNA(Ala) + AMP + diphosphate. Functionally, catalyzes the attachment of alanine to tRNA(Ala) in a two-step reaction: alanine is first activated by ATP to form Ala-AMP and then transferred to the acceptor end of tRNA(Ala). Also edits incorrectly charged Ser-tRNA(Ala) and Gly-tRNA(Ala) via its editing domain. The sequence is that of Alanine--tRNA ligase from Rickettsia conorii (strain ATCC VR-613 / Malish 7).